The following is a 302-amino-acid chain: Dihydroorotate dehydrogenase B (NAD(+)), catalytic subunit (302 aa).

FMN-binding positions include serine 20 and 44–45; that span reads KG. Substrate-binding positions include lysine 44 and 68 to 72; that span reads NSVGL. Residues asparagine 98 and asparagine 125 each coordinate FMN. Asparagine 125 contacts substrate. The Nucleophile role is filled by cysteine 128. The FMN site is built by lysine 163 and isoleucine 189. 190-191 is a binding site for substrate; it reads NT. Residues glycine 215, 241–242, and 263–264 each bind FMN; these read GG and GT.

The protein belongs to the dihydroorotate dehydrogenase family. Type 1 subfamily. In terms of assembly, heterotetramer of 2 PyrK and 2 PyrD type B subunits. Requires FMN as cofactor.

The protein resides in the cytoplasm. It carries out the reaction (S)-dihydroorotate + NAD(+) = orotate + NADH + H(+). The protein operates within pyrimidine metabolism; UMP biosynthesis via de novo pathway; orotate from (S)-dihydroorotate (NAD(+) route): step 1/1. Functionally, catalyzes the conversion of dihydroorotate to orotate with NAD(+) as electron acceptor. This chain is Dihydroorotate dehydrogenase B (NAD(+)), catalytic subunit (pyrD), found in Thermoanaerobacter pseudethanolicus (strain ATCC 33223 / 39E) (Clostridium thermohydrosulfuricum).